Consider the following 660-residue polypeptide: UvrABC system protein B (660 aa).

Residues 26-414 form the Helicase ATP-binding domain; sequence KKVLAGQRHQ…PEMTEQIIRP (389 aa). Residue 39-46 coordinates ATP; it reads GATGTGKT. The Beta-hairpin signature appears at 92-115; sequence YYDYYQPEAYVPSTDTFIEKDASI. Residues 430-596 form the Helicase C-terminal domain; the sequence is QIDNLIEEIR…TIRKEVRDVI (167 aa). Residues 624–659 enclose the UVR domain; that stretch reads EKVIEQMENEMKQAAKDLDFEKAAELRDVILELKAE.

This sequence belongs to the UvrB family. As to quaternary structure, forms a heterotetramer with UvrA during the search for lesions. Interacts with UvrC in an incision complex.

The protein localises to the cytoplasm. The UvrABC repair system catalyzes the recognition and processing of DNA lesions. A damage recognition complex composed of 2 UvrA and 2 UvrB subunits scans DNA for abnormalities. Upon binding of the UvrA(2)B(2) complex to a putative damaged site, the DNA wraps around one UvrB monomer. DNA wrap is dependent on ATP binding by UvrB and probably causes local melting of the DNA helix, facilitating insertion of UvrB beta-hairpin between the DNA strands. Then UvrB probes one DNA strand for the presence of a lesion. If a lesion is found the UvrA subunits dissociate and the UvrB-DNA preincision complex is formed. This complex is subsequently bound by UvrC and the second UvrB is released. If no lesion is found, the DNA wraps around the other UvrB subunit that will check the other stand for damage. The polypeptide is UvrABC system protein B (Oceanobacillus iheyensis (strain DSM 14371 / CIP 107618 / JCM 11309 / KCTC 3954 / HTE831)).